A 163-amino-acid chain; its full sequence is uncharacterized protein (163 aa).

This is an uncharacterized protein from Homo sapiens (Human).